We begin with the raw amino-acid sequence, 1127 residues long: Zinc finger protein basonuclin-2 (1127 aa).

Positions 44-67 are disordered; that stretch reads SEEAEVDVRERDTQRDREPKRARD. Residues 49 to 67 are compositionally biased toward basic and acidic residues; it reads VDVRERDTQRDREPKRARD. Lys-305 is covalently cross-linked (Glycyl lysine isopeptide (Lys-Gly) (interchain with G-Cter in SUMO2)). Residues 386-450 are disordered; sequence STQNEYNESS…DLSKTEHPKS (65 aa). Over residues 389–400 the composition is skewed to low complexity; sequence NEYNESSESEVS. Over residues 403 to 422 the composition is skewed to polar residues; sequence PYKSDQTPNRNALTSITNVE. Glycyl lysine isopeptide (Lys-Gly) (interchain with G-Cter in SUMO2) cross-links involve residues Lys-424, Lys-444, and Lys-449. The C2H2-type 1 zinc finger occupies 469–492; it reads VFCNACGKTFYDKGTLKIHYNAVH. Ser-589 carries the phosphoserine modification. Lys-669 is covalently cross-linked (Glycyl lysine isopeptide (Lys-Gly) (interchain with G-Cter in SUMO2)). The disordered stretch occupies residues 675-772; the sequence is IDTADEFDDE…EESMEGDEHL (98 aa). Acidic residues predominate over residues 676-689; the sequence is DTADEFDDEDDDPN. Composition is skewed to basic and acidic residues over residues 698–708 and 747–772; these read MSHDNHCHSQD and ERDYENESESSEPKLGEESMEGDEHL. Residues 861-884 form a C2H2-type 2 zinc finger; it reads KICYVCKKSFKSSYSVKLHYRNVH. Residues Lys-922 and Lys-947 each participate in a glycyl lysine isopeptide (Lys-Gly) (interchain with G-Cter in SUMO2) cross-link. 2 disordered regions span residues 955–976 and 996–1041; these read LGLDGREDASSPAGTEDSHLNG and LQSS…TLPG. Residues 1010 to 1023 are compositionally biased toward acidic residues; it reads AGSDEGILLDDIDG. 2 C2H2-type zinc fingers span residues 1063–1086 and 1091–1118; these read IMCNICHKMYSNKGTLRVHYKTVH and HKCKVPGCNMMFSSVRSRNRHSQNPNLH. The disordered stretch occupies residues 1107-1127; that stretch reads SRNRHSQNPNLHKNIPFTSID.

In terms of tissue distribution, highly expressed in ovary, testis and kidney. Expressed at moderate levels in skin and small intestine, and at lower levels in lung. Trace amounts of expression detected in liver and colon. Not detected in brain, spleen or thymus.

The protein resides in the nucleus. Probable transcription factor specific for skin keratinocytes. May play a role in the differentiation of spermatozoa and oocytes. May also play an important role in early urinary-tract development. In Mus musculus (Mouse), this protein is Zinc finger protein basonuclin-2.